Consider the following 494-residue polypeptide: Trigger factor (494 aa).

Residues 169-254 (GDRITMDYVG…VKDVAAPGAV (86 aa)) enclose the PPIase FKBP-type domain. Positions 440–494 (LLAEDEGEAKAETKKAAPKKKAAAKSEAAEAGEGEEAAPKKKAAPKKKASEDSAE) are disordered.

This sequence belongs to the FKBP-type PPIase family. Tig subfamily.

It is found in the cytoplasm. The enzyme catalyses [protein]-peptidylproline (omega=180) = [protein]-peptidylproline (omega=0). Functionally, involved in protein export. Acts as a chaperone by maintaining the newly synthesized protein in an open conformation. Functions as a peptidyl-prolyl cis-trans isomerase. The chain is Trigger factor from Rhizobium etli (strain ATCC 51251 / DSM 11541 / JCM 21823 / NBRC 15573 / CFN 42).